We begin with the raw amino-acid sequence, 416 residues long: Serine hydroxymethyltransferase (416 aa).

Residues Leu121 and 125-127 (GHL) contribute to the (6S)-5,6,7,8-tetrahydrofolate site. An N6-(pyridoxal phosphate)lysine modification is found at Lys229. (6S)-5,6,7,8-tetrahydrofolate is bound by residues Glu245 and 354 to 356 (SPF).

This sequence belongs to the SHMT family. As to quaternary structure, homodimer. Requires pyridoxal 5'-phosphate as cofactor.

It localises to the cytoplasm. The enzyme catalyses (6R)-5,10-methylene-5,6,7,8-tetrahydrofolate + glycine + H2O = (6S)-5,6,7,8-tetrahydrofolate + L-serine. The protein operates within one-carbon metabolism; tetrahydrofolate interconversion. Its pathway is amino-acid biosynthesis; glycine biosynthesis; glycine from L-serine: step 1/1. Catalyzes the reversible interconversion of serine and glycine with tetrahydrofolate (THF) serving as the one-carbon carrier. This reaction serves as the major source of one-carbon groups required for the biosynthesis of purines, thymidylate, methionine, and other important biomolecules. Also exhibits THF-independent aldolase activity toward beta-hydroxyamino acids, producing glycine and aldehydes, via a retro-aldol mechanism. This Aliivibrio fischeri (strain ATCC 700601 / ES114) (Vibrio fischeri) protein is Serine hydroxymethyltransferase.